A 120-amino-acid polypeptide reads, in one-letter code: Neuromedin-B (120 aa).

The signal sequence occupies residues 1-29 (MSAVPLTRMLPLRFLTHLLLLSFIPLYFC). Residues 30–44 (MEFSEDARNIEKIRR) constitute a propeptide that is removed on maturation. Methionine 54 carries the methionine amide modification. Residues 58–120 (SLQDTYNPSE…MDDYIKTTQK (63 aa)) constitute a propeptide that is removed on maturation.

Belongs to the bombesin/neuromedin-B/ranatensin family. In terms of tissue distribution, brain, intestine, and ovaries and early embryos (stages 2 and 10).

The protein localises to the secreted. Its function is as follows. Stimulates smooth muscle contraction. The polypeptide is Neuromedin-B (nmb) (Xenopus laevis (African clawed frog)).